Here is a 284-residue protein sequence, read N- to C-terminus: Probable palmitoyltransferase ZDHHC24 (284 aa).

The Cytoplasmic segment spans residues 1–18 (MGQPWAAGSTDGAPAQLP). A helical membrane pass occupies residues 19-39 (LVLTALWAAAVGLELAYVLVL). At 40-52 (GPGPPPLGPLARA) the chain is on the extracellular side. Residues 53-73 (LQLALAAFQLLNLLGNVGLFL) form a helical membrane-spanning segment. Over 74 to 137 (RSDPSIRGVM…GRCVGFGNYR (64 aa)) the chain is Cytoplasmic. Residues 94–144 (AYCYQCQSQVPPRSGHCSACRVCILRRDHHCRLLGRCVGFGNYRPFLCLLL) enclose the DHHC domain. The S-palmitoyl cysteine intermediate role is filled by cysteine 124. Residues 138 to 158 (PFLCLLLHAAGVLLHVSVLLG) traverse the membrane as a helical segment. At 159–166 (PALSALLR) the chain is on the extracellular side. The helical transmembrane segment at 167–187 (AHTPLHMAALLLLPWLMLLTG) threads the bilayer. The Cytoplasmic portion of the chain corresponds to 188–201 (RVSLAQFALAFVTD). The chain crosses the membrane as a helical span at residues 202-222 (TCVAGALLCGAGLLFHGMLLL). The Extracellular portion of the chain corresponds to 223 to 284 (RGQTTWEWAR…TTADVGHTAS (62 aa)).

The protein belongs to the DHHC palmitoyltransferase family.

It is found in the membrane. It carries out the reaction L-cysteinyl-[protein] + hexadecanoyl-CoA = S-hexadecanoyl-L-cysteinyl-[protein] + CoA. Functionally, probable palmitoyltransferase that could catalyze the addition of palmitate onto various protein substrates. The sequence is that of Probable palmitoyltransferase ZDHHC24 from Homo sapiens (Human).